Reading from the N-terminus, the 38-residue chain is Toxin CSTX-16 (38 aa).

Glutamine amide is present on residues Gln19 and Gln38.

The protein belongs to the cationic peptide 04 (cupiennin) family. 10 (double chain) subfamily. Expressed by the venom gland.

Its subcellular location is the secreted. The chain is Toxin CSTX-16 from Cupiennius salei (American wandering spider).